We begin with the raw amino-acid sequence, 112 residues long: T cell receptor alpha variable 2 (112 aa).

A signal peptide spans Met1 to Ser25. An Ig-like domain is found at Lys26–Glu112. Cys47 and Cys109 are oxidised to a cystine. 2 N-linked (GlcNAc...) asparagine glycosylation sites follow: Asn48 and Asn84.

As to quaternary structure, alpha-beta TR is a heterodimer composed of an alpha and beta chain; disulfide-linked. The alpha-beta TR is associated with the transmembrane signaling CD3 coreceptor proteins to form the TR-CD3 (TcR or TCR). The assembly of alpha-beta TR heterodimers with CD3 occurs in the endoplasmic reticulum where a single alpha-beta TR heterodimer associates with one CD3D-CD3E heterodimer, one CD3G-CD3E heterodimer and one CD247 homodimer forming a stable octameric structure. CD3D-CD3E and CD3G-CD3E heterodimers preferentially associate with TR alpha and TR beta chains, respectively. The association of the CD247 homodimer is the last step of TcR assembly in the endoplasmic reticulum and is required for transport to the cell surface.

The protein localises to the cell membrane. V region of the variable domain of T cell receptor (TR) alpha chain that participates in the antigen recognition. Alpha-beta T cell receptors are antigen specific receptors which are essential to the immune response and are present on the cell surface of T lymphocytes. Recognize peptide-major histocompatibility (MH) (pMH) complexes that are displayed by antigen presenting cells (APC), a prerequisite for efficient T cell adaptive immunity against pathogens. Binding of alpha-beta TR to pMH complex initiates TR-CD3 clustering on the cell surface and intracellular activation of LCK that phosphorylates the ITAM motifs of CD3G, CD3D, CD3E and CD247 enabling the recruitment of ZAP70. In turn ZAP70 phosphorylates LAT, which recruits numerous signaling molecules to form the LAT signalosome. The LAT signalosome propagates signal branching to three major signaling pathways, the calcium, the mitogen-activated protein kinase (MAPK) kinase and the nuclear factor NF-kappa-B (NF-kB) pathways, leading to the mobilization of transcription factors that are critical for gene expression and essential for T cell growth and differentiation. The T cell repertoire is generated in the thymus, by V-(D)-J rearrangement. This repertoire is then shaped by intrathymic selection events to generate a peripheral T cell pool of self-MH restricted, non-autoaggressive T cells. Post-thymic interaction of alpha-beta TR with the pMH complexes shapes TR structural and functional avidity. In Homo sapiens (Human), this protein is T cell receptor alpha variable 2.